The chain runs to 169 residues: MAVLQVLHIPDERLRKVAEPVKEVNAEIQRIVDDMFDTMYAEEGIGLAATQVDIHQRIIVIDVSENREERLVLINPELLEKDGETGIEEGCLSIPEQRALVPRAEKVKIRALDRDGKPFELEADGLLAICIQHEMDHLVGKLFIDYLSPLKQQRIRQKVEKLDRLRSRA.

Residues C91 and H133 each contribute to the Fe cation site. E134 is a catalytic residue. H137 is a binding site for Fe cation.

Belongs to the polypeptide deformylase family. Requires Fe(2+) as cofactor.

It carries out the reaction N-terminal N-formyl-L-methionyl-[peptide] + H2O = N-terminal L-methionyl-[peptide] + formate. Its function is as follows. Removes the formyl group from the N-terminal Met of newly synthesized proteins. Requires at least a dipeptide for an efficient rate of reaction. N-terminal L-methionine is a prerequisite for activity but the enzyme has broad specificity at other positions. The protein is Peptide deformylase of Klebsiella pneumoniae (strain 342).